Consider the following 388-residue polypeptide: Processive diacylglycerol beta-glucosyltransferase (388 aa).

This sequence belongs to the glycosyltransferase 28 family. UgtP subfamily.

Its subcellular location is the cell membrane. It catalyses the reaction a 1,2-diacyl-3-O-(beta-D-glucopyranosyl)-sn-glycerol + UDP-alpha-D-glucose = a 1,2-diacyl-3-O-(beta-D-Glc-(1-&gt;6)-beta-D-Glc)-sn-glycerol + UDP + H(+). The enzyme catalyses a 1,2-diacyl-3-O-(beta-D-Glc-(1-&gt;6)-beta-D-Glc)-sn-glycerol + UDP-alpha-D-glucose = a 1,2-diacyl-3-O-(beta-D-Glc-(1-&gt;6)-beta-D-Glc-(1-&gt;6)-beta-D-Glc)-sn-glycerol + UDP + H(+). The catalysed reaction is a 1,2-diacyl-sn-glycerol + UDP-alpha-D-glucose = a 1,2-diacyl-3-O-(beta-D-glucopyranosyl)-sn-glycerol + UDP + H(+). It participates in glycolipid metabolism; diglucosyl-diacylglycerol biosynthesis. In terms of biological role, processive glucosyltransferase involved in the biosynthesis of both the bilayer- and non-bilayer-forming membrane glucolipids. Is able to successively transfer up to three glucosyl residues to diacylglycerol (DAG), thereby catalyzing the formation of beta-monoglucosyl-DAG (3-O-(beta-D-glucopyranosyl)-1,2-diacyl-sn-glycerol), beta-diglucosyl-DAG (3-O-(beta-D-glucopyranosyl-beta-(1-&gt;6)-D-glucopyranosyl)-1,2-diacyl-sn-glycerol) and beta-triglucosyl-DAG (3-O-(beta-D-glucopyranosyl-beta-(1-&gt;6)-D-glucopyranosyl-beta-(1-&gt;6)-D-glucopyranosyl)-1,2-diacyl-sn-glycerol). Beta-diglucosyl-DAG is the predominant glycolipid found in Bacillales and is also used as a membrane anchor for lipoteichoic acid (LTA). In Bacillus cytotoxicus (strain DSM 22905 / CIP 110041 / 391-98 / NVH 391-98), this protein is Processive diacylglycerol beta-glucosyltransferase.